A 253-amino-acid chain; its full sequence is GTP cyclohydrolase 1 type 2 homolog (253 aa).

A divalent metal cation contacts are provided by histidine 64, histidine 65, aspartate 101, histidine 222, and glutamate 226.

The protein belongs to the GTP cyclohydrolase I type 2/NIF3 family. Homohexamer.

The sequence is that of GTP cyclohydrolase 1 type 2 homolog from Halobacterium salinarum (strain ATCC 700922 / JCM 11081 / NRC-1) (Halobacterium halobium).